Reading from the N-terminus, the 21-residue chain is DYE-linked aldehyde dehydrogenase, gamma chain (21 aa).

Heterotetramer composed of an alpha, a beta and two gamma chains. It depends on [2Fe-2S] cluster as a cofactor.

In terms of biological role, active with aldehydes and formate esters as substrates. The polypeptide is DYE-linked aldehyde dehydrogenase, gamma chain (Amycolatopsis methanolica).